Consider the following 359-residue polypeptide: Probable mannitol dehydrogenase (359 aa).

Zn(2+) is bound by residues cysteine 50, histidine 72, cysteine 103, cysteine 106, cysteine 109, cysteine 117, and cysteine 165.

This sequence belongs to the zinc-containing alcohol dehydrogenase family. The cofactor is Zn(2+).

The catalysed reaction is D-mannitol + NAD(+) = D-mannose + NADH + H(+). In terms of biological role, oxidizes mannitol to mannose. Provides the initial step by which translocated mannitol is committed to central metabolism and, by regulating mannitol pool size, is important in regulating salt tolerance at the cellular level. This chain is Probable mannitol dehydrogenase (CAD1), found in Medicago sativa (Alfalfa).